Here is a 196-residue protein sequence, read N- to C-terminus: Ribosome maturation factor RimP (196 aa).

Residues L164 to E196 form a disordered region. Basic residues predominate over residues G173 to K182.

Belongs to the RimP family.

It localises to the cytoplasm. In terms of biological role, required for maturation of 30S ribosomal subunits. The protein is Ribosome maturation factor RimP of Xanthomonas euvesicatoria pv. vesicatoria (strain 85-10) (Xanthomonas campestris pv. vesicatoria).